We begin with the raw amino-acid sequence, 273 residues long: SPRY domain-containing SOCS box protein 4 (273 aa).

Positions 1–34 are disordered; sequence MGQKLSGSLKSVEVREPALRPAKRELRGAEPGRP. A compositionally biased stretch (basic and acidic residues) spans 12-34; sequence VEVREPALRPAKRELRGAEPGRP. The B30.2/SPRY domain occupies 34 to 233; it reads PARLDQLLDM…MRYINGLDPE (200 aa). One can recognise an SOCS box domain in the interval 234 to 273; it reads PLPLMDLCRRSIRSALGRQRLQDISSLPLPQSLKNYLQYQ.

The protein belongs to the SPSB family. Component of the probable ECS(SPSB4) E3 ubiquitin-protein ligase complex which contains CUL5, RNF7/RBX2, Elongin BC complex and SPSB4. Interacts with CUL5; RNF7; ELOB and ELOC. Interacts with MET. Interacts (via B30.2/SPRY domain) with PAWR; this interaction occurs in association with the Elongin BC complex. Interacts with NOS2. Interacts with EPHB2.

The protein resides in the cytoplasm. It is found in the cytosol. It functions in the pathway protein modification; protein ubiquitination. Its function is as follows. Substrate recognition component of a SCF-like ECS (Elongin BC-CUL2/5-SOCS-box protein) E3 ubiquitin-protein ligase complex which mediates the ubiquitination and subsequent proteasomal degradation of target proteins. Negatively regulates nitric oxide (NO) production and limits cellular toxicity in activated macrophages by mediating the ubiquitination and proteasomal degradation of NOS2. Acts as a bridge which links NOS2 with the ECS E3 ubiquitin ligase complex components ELOC and CUL5. Diminishes EphB2-dependent cell repulsive responses by mediating the ubiquitination and degradation of EphB2/CTF2. Regulates cellular clock function by mediating the ubiquitin/proteasome-dependent degradation of the circadian transcriptional repressor NR1D1. This Homo sapiens (Human) protein is SPRY domain-containing SOCS box protein 4 (SPSB4).